The following is a 296-amino-acid chain: METAGDKKWSAEEPKEEVELQMSSQPSTAPAKAKATGKKQKKSETDNGCKPKEGKPQDTETPGQTRRKVPIPPIPEYLPPVNLIHRDVLRAWCQKKRVSSKGQKLDAYKRLLARAFPEQMLELRNVPDSAKDARLKTAHKKMKTEPGEESEVTVPLEMVPVPEEQIPALIDPPMLYEEVSTTVVTTPATEAVLASWARIASNAKKYEAVPADASSSSEVKGEMWCVVHGTSLPGNSRGWVRLQFHAGQAWVPDKKGKAIALFLLPACTFPPPHLEDNMLCPKCVHKNKILTKSLEG.

Basic and acidic residues predominate over residues 1 to 13; sequence METAGDKKWSAEE. A disordered region spans residues 1–73; it reads METAGDKKWS…QTRRKVPIPP (73 aa). Residues 23 to 34 show a composition bias toward low complexity; it reads SSQPSTAPAKAK. Positions 42–58 are enriched in basic and acidic residues; it reads KSETDNGCKPKEGKPQD.

Interacts with DPPA2. Interacts with PCGF1. In terms of tissue distribution, expressed in pluripotent embryonic cells, but not in differentiated somatic tissues.

Its subcellular location is the nucleus. May be involved in the maintenance of active epigenetic status of target genes. May inhibit differentiation of embryonic stem (ES) cells into a primitive ectoderm lineage. This is Developmental pluripotency-associated protein 4 (Dppa4) from Mus musculus (Mouse).